Reading from the N-terminus, the 323-residue chain is Protease Do-like 5, chloroplastic (323 aa).

A chloroplast-targeting transit peptide spans 1 to 28 (MTMALASSKAFSSIFNTLSPINQSKFVL). Residues 29-73 (ACSGSNHVDVIDRRRRIMIFGSSLALTSSLLGSNQQRLPMESAIA) constitute a thylakoid transit peptide. Catalysis depends on charge relay system residues His-147, Asp-188, and Ser-266. Positions 186–283 (DNDLAVLKIE…YGHTIGVNTA (98 aa)) are serine protease.

This sequence belongs to the peptidase S1C family.

Its subcellular location is the plastid. The protein localises to the chloroplast thylakoid lumen. Its function is as follows. Probable serine protease. This Arabidopsis thaliana (Mouse-ear cress) protein is Protease Do-like 5, chloroplastic (DEGP5).